A 551-amino-acid polypeptide reads, in one-letter code: Cation/acetate symporter ActP (551 aa).

Helical transmembrane passes span 5-25, 34-54, 77-97, 104-124, 150-170, 184-204, 207-227, 263-283, 304-324, 356-376, 406-426, 430-450, 469-489, and 498-518; these read HWSA…ALTG, IQAI…TYWA, GLAI…SALV, GLIY…LIAE, LSAC…MVGA, VAVV…GMLA, WVQI…AIMV, ISAL…PHIL, GFIG…ILLV, FFLG…VAGL, VSKI…ILFE, IAFM…PIII, LGLS…VTIL, and YEYP…FFSI.

This sequence belongs to the sodium:solute symporter (SSF) (TC 2.A.21) family.

Its subcellular location is the cell inner membrane. In terms of biological role, transports acetate. The polypeptide is Cation/acetate symporter ActP (Yersinia pseudotuberculosis serotype IB (strain PB1/+)).